Here is a 59-residue protein sequence, read N- to C-terminus: Zinc finger protein HVO_2753 (59 aa).

4 short sequence motifs (c(P)XCG motif) span residues 12–16 (CVSCG), 29–33 (CPDCG), 39–43 (CSKCR), and 51–55 (CPDCG). Zn(2+) contacts are provided by C29 and C32. Zn(2+) is bound by residues C51 and C54.

Monomer in solution.

Zinc-binding protein that binds only one zinc ion. Is required for swarming and biofilm formation. The sequence is that of Zinc finger protein HVO_2753 from Haloferax volcanii (strain ATCC 29605 / DSM 3757 / JCM 8879 / NBRC 14742 / NCIMB 2012 / VKM B-1768 / DS2) (Halobacterium volcanii).